Reading from the N-terminus, the 400-residue chain is Pyruvate dehydrogenase E1 component subunit beta-4, chloroplastic (400 aa).

The interval 1 to 34 is disordered; that stretch reads MAAASSLHAAPRVGSSSSFSSSSSAGRRSASAAR. Residues 1–57 constitute a chloroplast transit peptide; it reads MAAASSLHAAPRVGSSSSFSSSSSAGRRSASAARSVRVAAAAGSCAARRAGGRMVAR. The segment covering 9–34 has biased composition (low complexity); the sequence is AAPRVGSSSSFSSSSSAGRRSASAAR. Glu136 is a binding site for thiamine diphosphate. The K(+) site is built by Ile189, Ala237, Ile238, and Asn242.

In terms of assembly, tetramer of 2 alpha and 2 beta subunits. Thiamine diphosphate serves as cofactor.

Its subcellular location is the plastid. It localises to the chloroplast. It catalyses the reaction N(6)-[(R)-lipoyl]-L-lysyl-[protein] + pyruvate + H(+) = N(6)-[(R)-S(8)-acetyldihydrolipoyl]-L-lysyl-[protein] + CO2. Functionally, the pyruvate dehydrogenase complex catalyzes the overall conversion of pyruvate to acetyl-CoA and CO(2). It contains multiple copies of three enzymatic components: pyruvate dehydrogenase (E1), dihydrolipoamide acetyltransferase (E2) and lipoamide dehydrogenase (E3). The polypeptide is Pyruvate dehydrogenase E1 component subunit beta-4, chloroplastic (Oryza sativa subsp. japonica (Rice)).